We begin with the raw amino-acid sequence, 301 residues long: Probable 5-dehydro-4-deoxyglucarate dehydratase (301 aa).

The protein belongs to the DapA family.

It catalyses the reaction 5-dehydro-4-deoxy-D-glucarate + H(+) = 2,5-dioxopentanoate + CO2 + H2O. It functions in the pathway carbohydrate acid metabolism; D-glucarate degradation; 2,5-dioxopentanoate from D-glucarate: step 2/2. In Xanthobacter autotrophicus (strain ATCC BAA-1158 / Py2), this protein is Probable 5-dehydro-4-deoxyglucarate dehydratase.